The following is a 337-amino-acid chain: Probable poly [ADP-ribose] polymerase DDB_G0278045 (337 aa).

The PARP catalytic domain maps to lysine 21–asparagine 231. The span at asparagine 218–glutamine 242 shows a compositional bias: low complexity. Positions asparagine 218–asparagine 247 are disordered.

The catalysed reaction is L-aspartyl-[protein] + NAD(+) = 4-O-(ADP-D-ribosyl)-L-aspartyl-[protein] + nicotinamide. It carries out the reaction L-glutamyl-[protein] + NAD(+) = 5-O-(ADP-D-ribosyl)-L-glutamyl-[protein] + nicotinamide. The enzyme catalyses NAD(+) + (ADP-D-ribosyl)n-acceptor = nicotinamide + (ADP-D-ribosyl)n+1-acceptor + H(+).. The sequence is that of Probable poly [ADP-ribose] polymerase DDB_G0278045 from Dictyostelium discoideum (Social amoeba).